We begin with the raw amino-acid sequence, 292 residues long: 4-hydroxy-tetrahydrodipicolinate synthase (292 aa).

Thr-45 serves as a coordination point for pyruvate. The Proton donor/acceptor role is filled by Tyr-133. Lys-161 serves as the catalytic Schiff-base intermediate with substrate. Ile-203 serves as a coordination point for pyruvate.

The protein belongs to the DapA family. In terms of assembly, homodimer.

It localises to the cytoplasm. The enzyme catalyses L-aspartate 4-semialdehyde + pyruvate = (2S,4S)-4-hydroxy-2,3,4,5-tetrahydrodipicolinate + H2O + H(+). It functions in the pathway amino-acid biosynthesis; L-lysine biosynthesis via DAP pathway; (S)-tetrahydrodipicolinate from L-aspartate: step 3/4. Its function is as follows. Catalyzes the condensation of (S)-aspartate-beta-semialdehyde [(S)-ASA] and pyruvate to 4-hydroxy-tetrahydrodipicolinate (HTPA). This Pseudomonas putida (strain W619) protein is 4-hydroxy-tetrahydrodipicolinate synthase.